The following is a 142-amino-acid chain: Small ribosomal subunit protein uS11 (142 aa).

Residues Met1–Ala21 form a disordered region. Basic residues predominate over residues Gly7–Lys17.

It belongs to the universal ribosomal protein uS11 family. As to quaternary structure, part of the 30S ribosomal subunit. Interacts with proteins S7 and S18. Binds to IF-3.

Functionally, located on the platform of the 30S subunit, it bridges several disparate RNA helices of the 16S rRNA. Forms part of the Shine-Dalgarno cleft in the 70S ribosome. In Paenarthrobacter aurescens (strain TC1), this protein is Small ribosomal subunit protein uS11.